We begin with the raw amino-acid sequence, 103 residues long: Carboxysome shell protein CcmK2 (103 aa).

Residues alanine 4–proline 90 enclose the BMC domain.

It belongs to the bacterial microcompartments protein family. CcmK subfamily. As to quaternary structure, homohexamer, might also make dodecamers. Interacts with full-length CcmM. Forms mixed heterohexamers of all possible stoichiometries with CcmK1, which might form dodecamers. Only very weak interactions with CcmK3 and CcmK4 were seen.

It localises to the carboxysome. One of the shell proteins of the carboxysome, a polyhedral inclusion where RuBisCO (ribulose bisphosphate carboxylase, rbcL-rbcS) is sequestered. The central pore probably regulates metabolite flux. Hexamers make sheets that form the facets of the polyhedral carboxysome. This is Carboxysome shell protein CcmK2 from Synechocystis sp. (strain ATCC 27184 / PCC 6803 / Kazusa).